Here is a 94-residue protein sequence, read N- to C-terminus: Large ribosomal subunit protein bL27 (94 aa).

The propeptide occupies 1–9 (MLKLNLQFF). A disordered region spans residues 12–32 (KKGVSSTKNGRDSESKRLGAK). Positions 20-32 (NGRDSESKRLGAK) are enriched in basic and acidic residues.

Belongs to the bacterial ribosomal protein bL27 family. In terms of processing, the N-terminus is cleaved by ribosomal processing cysteine protease Prp.

This is Large ribosomal subunit protein bL27 from Staphylococcus carnosus (strain TM300).